We begin with the raw amino-acid sequence, 461 residues long: Cysteine--tRNA ligase (461 aa).

Cys-28 contacts Zn(2+). Residues 30–40 (ITVYDLCHIGH) carry the 'HIGH' region motif. The Zn(2+) site is built by Cys-209, His-234, and Glu-238. A 'KMSKS' region motif is present at residues 266 to 270 (KMSKS). Lys-269 serves as a coordination point for ATP.

Belongs to the class-I aminoacyl-tRNA synthetase family. As to quaternary structure, monomer. Zn(2+) serves as cofactor.

The protein resides in the cytoplasm. It catalyses the reaction tRNA(Cys) + L-cysteine + ATP = L-cysteinyl-tRNA(Cys) + AMP + diphosphate. The protein is Cysteine--tRNA ligase of Shigella boydii serotype 18 (strain CDC 3083-94 / BS512).